Here is a 348-residue protein sequence, read N- to C-terminus: Selenide, water dikinase (348 aa).

The active site involves cysteine 17. Residues lysine 20 and 48–50 each bind ATP; that span reads TSD. Residue aspartate 51 coordinates Mg(2+). ATP contacts are provided by residues aspartate 68, aspartate 91, and 139–141; that span reads GHT. Aspartate 91 serves as a coordination point for Mg(2+). Position 227 (aspartate 227) interacts with Mg(2+).

This sequence belongs to the selenophosphate synthase 1 family. Class I subfamily. Homodimer. Mg(2+) serves as cofactor.

The enzyme catalyses hydrogenselenide + ATP + H2O = selenophosphate + AMP + phosphate + 2 H(+). Synthesizes selenophosphate from selenide and ATP. This Dechloromonas aromatica (strain RCB) protein is Selenide, water dikinase.